Reading from the N-terminus, the 253-residue chain is DNA repair protein RecO (253 aa).

It belongs to the RecO family.

Functionally, involved in DNA repair and RecF pathway recombination. The polypeptide is DNA repair protein RecO (Streptococcus agalactiae serotype III (strain NEM316)).